A 363-amino-acid polypeptide reads, in one-letter code: Phosphoserine aminotransferase (363 aa).

L-glutamate is bound at residue arginine 42. Tryptophan 105, threonine 155, aspartate 175, and glutamine 198 together coordinate pyridoxal 5'-phosphate. Residue lysine 199 is modified to N6-(pyridoxal phosphate)lysine. Asparagine 240–threonine 241 is a binding site for pyridoxal 5'-phosphate.

Belongs to the class-V pyridoxal-phosphate-dependent aminotransferase family. SerC subfamily. In terms of assembly, homodimer. Requires pyridoxal 5'-phosphate as cofactor.

It localises to the cytoplasm. The enzyme catalyses O-phospho-L-serine + 2-oxoglutarate = 3-phosphooxypyruvate + L-glutamate. It catalyses the reaction 4-(phosphooxy)-L-threonine + 2-oxoglutarate = (R)-3-hydroxy-2-oxo-4-phosphooxybutanoate + L-glutamate. The protein operates within amino-acid biosynthesis; L-serine biosynthesis; L-serine from 3-phospho-D-glycerate: step 2/3. It participates in cofactor biosynthesis; pyridoxine 5'-phosphate biosynthesis; pyridoxine 5'-phosphate from D-erythrose 4-phosphate: step 3/5. Functionally, catalyzes the reversible conversion of 3-phosphohydroxypyruvate to phosphoserine and of 3-hydroxy-2-oxo-4-phosphonooxybutanoate to phosphohydroxythreonine. The protein is Phosphoserine aminotransferase of Herminiimonas arsenicoxydans.